The chain runs to 108 residues: MTTEKIDNISVTTQANVYFDGKCISHGITLADGTKKSVGVILPASLTFNTGAAEIMECVAGACEYKLAGSDEWVQSSAGESFSVPGNSKFDIRVAAGFEAYHYICHFA.

The protein belongs to the nucleoside phosphorylase PpnP family.

It catalyses the reaction a purine D-ribonucleoside + phosphate = a purine nucleobase + alpha-D-ribose 1-phosphate. It carries out the reaction adenosine + phosphate = alpha-D-ribose 1-phosphate + adenine. The enzyme catalyses cytidine + phosphate = cytosine + alpha-D-ribose 1-phosphate. The catalysed reaction is guanosine + phosphate = alpha-D-ribose 1-phosphate + guanine. It catalyses the reaction inosine + phosphate = alpha-D-ribose 1-phosphate + hypoxanthine. It carries out the reaction thymidine + phosphate = 2-deoxy-alpha-D-ribose 1-phosphate + thymine. The enzyme catalyses uridine + phosphate = alpha-D-ribose 1-phosphate + uracil. The catalysed reaction is xanthosine + phosphate = alpha-D-ribose 1-phosphate + xanthine. Its function is as follows. Catalyzes the phosphorolysis of diverse nucleosides, yielding D-ribose 1-phosphate and the respective free bases. Can use uridine, adenosine, guanosine, cytidine, thymidine, inosine and xanthosine as substrates. Also catalyzes the reverse reactions. The polypeptide is Pyrimidine/purine nucleoside phosphorylase (Polaromonas naphthalenivorans (strain CJ2)).